A 67-amino-acid polypeptide reads, in one-letter code: Beta-defensin 110 (67 aa).

The N-terminal stretch at 1 to 19 (MKIQLFFFILLFWVTILPA) is a signal peptide. 3 disulfide bridges follow: cysteine 35-cysteine 63, cysteine 42-cysteine 56, and cysteine 46-cysteine 64.

Belongs to the beta-defensin family.

Its subcellular location is the secreted. In terms of biological role, has antibacterial activity. In Pan troglodytes (Chimpanzee), this protein is Beta-defensin 110 (DEFB110).